A 442-amino-acid chain; its full sequence is Putative FNIP repeat-containing protein L170 (442 aa).

FNIP repeat units lie at residues 213 to 252 (FNSSINSLRNNIRVLKLGNSFNKPIDILPELLEELYIGRG), 253 to 294 (FNSE…LGCF), and 295 to 348 (FNQS…FGMY).

The protein is Putative FNIP repeat-containing protein L170 of Acanthamoeba polyphaga mimivirus (APMV).